Here is a 40-residue protein sequence, read N- to C-terminus: Photosystem II reaction center protein J (40 aa).

A helical transmembrane segment spans residues 8–28; that stretch reads IPLWIIGTVAGILVIGLIGIF.

It belongs to the PsbJ family. As to quaternary structure, PSII is composed of 1 copy each of membrane proteins PsbA, PsbB, PsbC, PsbD, PsbE, PsbF, PsbH, PsbI, PsbJ, PsbK, PsbL, PsbM, PsbT, PsbX, PsbY, PsbZ, Psb30/Ycf12, at least 3 peripheral proteins of the oxygen-evolving complex and a large number of cofactors. It forms dimeric complexes.

It localises to the plastid. The protein resides in the chloroplast thylakoid membrane. In terms of biological role, one of the components of the core complex of photosystem II (PSII). PSII is a light-driven water:plastoquinone oxidoreductase that uses light energy to abstract electrons from H(2)O, generating O(2) and a proton gradient subsequently used for ATP formation. It consists of a core antenna complex that captures photons, and an electron transfer chain that converts photonic excitation into a charge separation. This Oenothera elata subsp. hookeri (Hooker's evening primrose) protein is Photosystem II reaction center protein J.